Reading from the N-terminus, the 165-residue chain is Large ribosomal subunit protein mL49 (165 aa).

A compositionally biased stretch (low complexity) spans 42–75; that stretch reads TTATTTTPLQQQQQQQPTTQPTTPIQTQTGAAPT. Residues 42-81 are disordered; the sequence is TTATTTTPLQQQQQQQPTTQPTTPIQTQTGAAPTESTKPV.

Belongs to the mitochondrion-specific ribosomal protein mL49 family. In terms of assembly, component of the mitochondrial large ribosomal subunit (mt-LSU). Mature N.crassa 74S mitochondrial ribosomes consist of a small (37S) and a large (54S) subunit. The 37S small subunit contains a 16S ribosomal RNA (16S mt-rRNA) and 32 different proteins. The 54S large subunit contains a 23S rRNA (23S mt-rRNA) and 42 different proteins.

The protein localises to the mitochondrion. Functionally, component of the mitochondrial ribosome (mitoribosome), a dedicated translation machinery responsible for the synthesis of mitochondrial genome-encoded proteins, including at least some of the essential transmembrane subunits of the mitochondrial respiratory chain. The mitoribosomes are attached to the mitochondrial inner membrane and translation products are cotranslationally integrated into the membrane. The chain is Large ribosomal subunit protein mL49 (img2) from Neurospora crassa (strain ATCC 24698 / 74-OR23-1A / CBS 708.71 / DSM 1257 / FGSC 987).